A 216-amino-acid chain; its full sequence is ATP-dependent Clp protease proteolytic subunit 3 (216 aa).

Residue serine 120 is the Nucleophile of the active site. Histidine 145 is a catalytic residue.

The protein belongs to the peptidase S14 family. As to quaternary structure, fourteen ClpP subunits assemble into 2 heptameric rings which stack back to back to give a disk-like structure with a central cavity, resembling the structure of eukaryotic proteasomes.

The protein resides in the cytoplasm. The enzyme catalyses Hydrolysis of proteins to small peptides in the presence of ATP and magnesium. alpha-casein is the usual test substrate. In the absence of ATP, only oligopeptides shorter than five residues are hydrolyzed (such as succinyl-Leu-Tyr-|-NHMec, and Leu-Tyr-Leu-|-Tyr-Trp, in which cleavage of the -Tyr-|-Leu- and -Tyr-|-Trp bonds also occurs).. Functionally, cleaves peptides in various proteins in a process that requires ATP hydrolysis. Has a chymotrypsin-like activity. Plays a major role in the degradation of misfolded proteins. This is ATP-dependent Clp protease proteolytic subunit 3 from Prochlorococcus marinus (strain SARG / CCMP1375 / SS120).